We begin with the raw amino-acid sequence, 81 residues long: RNA-binding protein Hfq (81 aa).

In terms of domain architecture, Sm spans 10–70 (DLFLNSVRKS…ISTIMPSQPV (61 aa)).

This sequence belongs to the Hfq family. Homohexamer.

RNA chaperone that binds small regulatory RNA (sRNAs) and mRNAs to facilitate mRNA translational regulation in response to envelope stress, environmental stress and changes in metabolite concentrations. Also binds with high specificity to tRNAs. This Mesorhizobium japonicum (strain LMG 29417 / CECT 9101 / MAFF 303099) (Mesorhizobium loti (strain MAFF 303099)) protein is RNA-binding protein Hfq.